The following is a 119-amino-acid chain: Large ribosomal subunit protein bL19 (119 aa).

Belongs to the bacterial ribosomal protein bL19 family.

Functionally, this protein is located at the 30S-50S ribosomal subunit interface and may play a role in the structure and function of the aminoacyl-tRNA binding site. The sequence is that of Large ribosomal subunit protein bL19 from Pseudarthrobacter chlorophenolicus (strain ATCC 700700 / DSM 12829 / CIP 107037 / JCM 12360 / KCTC 9906 / NCIMB 13794 / A6) (Arthrobacter chlorophenolicus).